Reading from the N-terminus, the 141-residue chain is Nucleoside triphosphatase NudI (141 aa).

One can recognise a Nudix hydrolase domain in the interval 1-141 (MRQRTIVCPL…RHTLALKGLL (141 aa)). A Nudix box motif is present at residues 38-59 (GGVEPGERIEEALRREIREELG).

The protein belongs to the Nudix hydrolase family. NudI subfamily. Monomer. It depends on Mg(2+) as a cofactor.

The enzyme catalyses a ribonucleoside 5'-triphosphate + H2O = a ribonucleoside 5'-phosphate + diphosphate + H(+). The catalysed reaction is a 2'-deoxyribonucleoside 5'-triphosphate + H2O = a 2'-deoxyribonucleoside 5'-phosphate + diphosphate + H(+). It catalyses the reaction dUTP + H2O = dUMP + diphosphate + H(+). It carries out the reaction dTTP + H2O = dTMP + diphosphate + H(+). The enzyme catalyses dCTP + H2O = dCMP + diphosphate + H(+). In terms of biological role, catalyzes the hydrolysis of nucleoside triphosphates, with a preference for pyrimidine deoxynucleoside triphosphates (dUTP, dTTP and dCTP). The sequence is that of Nucleoside triphosphatase NudI from Salmonella paratyphi B (strain ATCC BAA-1250 / SPB7).